Consider the following 573-residue polypeptide: Sulfite reductase [NADPH] hemoprotein beta-component (573 aa).

The interval 1-20 (MAKVELKAPDGPPSDVERIK) is disordered. Residues Cys-438, Cys-444, Cys-483, and Cys-487 each coordinate [4Fe-4S] cluster. Siroheme is bound at residue Cys-487.

Belongs to the nitrite and sulfite reductase 4Fe-4S domain family. Alpha(8)-beta(8). The alpha component is a flavoprotein, the beta component is a hemoprotein. Requires siroheme as cofactor. [4Fe-4S] cluster is required as a cofactor.

It catalyses the reaction hydrogen sulfide + 3 NADP(+) + 3 H2O = sulfite + 3 NADPH + 4 H(+). It functions in the pathway sulfur metabolism; hydrogen sulfide biosynthesis; hydrogen sulfide from sulfite (NADPH route): step 1/1. Its function is as follows. Component of the sulfite reductase complex that catalyzes the 6-electron reduction of sulfite to sulfide. This is one of several activities required for the biosynthesis of L-cysteine from sulfate. The polypeptide is Sulfite reductase [NADPH] hemoprotein beta-component (Geobacillus kaustophilus (strain HTA426)).